The following is a 495-amino-acid chain: MKLDKNKIQISIGKNPSKTFYKLQLLLKDHFPENLKTKFSFQTASGIFTGENGQIFTDEVEKIIYLGLGETSKIKIRGVAQHFFQFGEKLKKWEGVGLEIHLPKVLTNSLSADLVVYQIVNSLEQGVYAINVLAKEYKENSKKIGNVSFILQDAAKLKEAEKGLKRGKIVSRYINGVRHIAHLPANHFTPEEFVSRSKEIAKDNGLKITVFDEPQLKKEKMGGILSVCEGSDKKAKMILLEYTPVKPITKKKLAIIGKGLTFDSGGISIKPAQDMHEMKYDMCGAATAIHAIGAIAELGLGVPVIAAIGVAENMPDAAAIKPGDVYTAYNGITVEVQNTDAEGRLVLGDVLSYVGKKFKPDYMLDLATLTGAIIISLGHEAAGVMSNSDVLTNLLKEASISSDERIWEMPLWEEYSEDLKSDIADIRNVAGRAGGSLSAAKFLERFVEPGIAWAHIDIAGTAWRKKTSGTQIGNGPTGYGVRLLVDLVEKIGKKK.

Residues Lys-258 and Asp-263 each coordinate Mn(2+). Residue Lys-270 is part of the active site. 3 residues coordinate Mn(2+): Asp-281, Asp-340, and Glu-342. Residue Arg-344 is part of the active site.

Belongs to the peptidase M17 family. The cofactor is Mn(2+).

It is found in the cytoplasm. The enzyme catalyses Release of an N-terminal amino acid, Xaa-|-Yaa-, in which Xaa is preferably Leu, but may be other amino acids including Pro although not Arg or Lys, and Yaa may be Pro. Amino acid amides and methyl esters are also readily hydrolyzed, but rates on arylamides are exceedingly low.. It carries out the reaction Release of an N-terminal amino acid, preferentially leucine, but not glutamic or aspartic acids.. In terms of biological role, presumably involved in the processing and regular turnover of intracellular proteins. Catalyzes the removal of unsubstituted N-terminal amino acids from various peptides. This Leptospira interrogans serogroup Icterohaemorrhagiae serovar Lai (strain 56601) protein is Probable cytosol aminopeptidase.